The following is a 217-amino-acid chain: UPF0502 protein AHA_2872 (217 aa).

It belongs to the UPF0502 family.

This is UPF0502 protein AHA_2872 from Aeromonas hydrophila subsp. hydrophila (strain ATCC 7966 / DSM 30187 / BCRC 13018 / CCUG 14551 / JCM 1027 / KCTC 2358 / NCIMB 9240 / NCTC 8049).